Reading from the N-terminus, the 74-residue chain is MSSGGLLLLLGLLTLWAEVTPISGQDRPKKPGLCPPRPQKPCVKECKNDWSCPGQQKCCNYGCIDECRDPIFVN.

The first 24 residues, 1–24 (MSSGGLLLLLGLLTLWAEVTPISG), serve as a signal peptide directing secretion. The WAP domain occupies 27 to 71 (RPKKPGLCPPRPQKPCVKECKNDWSCPGQQKCCNYGCIDECRDPI). Intrachain disulfides connect cysteine 34-cysteine 59, cysteine 42-cysteine 63, cysteine 46-cysteine 58, and cysteine 52-cysteine 67.

It belongs to the venom waprin family. As to expression, expressed by the venom gland.

It is found in the secreted. In terms of biological role, damages membranes of susceptible bacteria. Has no hemolytic activity. Not toxic to mice. Does not inhibit the proteinases elastase and cathepsin G. This Demansia vestigiata (Lesser black whip snake) protein is Veswaprin-a.